Reading from the N-terminus, the 327-residue chain is tRNA uridine(34) hydroxylase (327 aa).

In terms of domain architecture, Rhodanese spans 123-217; the sequence is SDPEVLVVDT…YLEEVPQEQS (95 aa). Cysteine 177 acts as the Cysteine persulfide intermediate in catalysis.

The protein belongs to the TrhO family.

It carries out the reaction uridine(34) in tRNA + AH2 + O2 = 5-hydroxyuridine(34) in tRNA + A + H2O. Catalyzes oxygen-dependent 5-hydroxyuridine (ho5U) modification at position 34 in tRNAs. This is tRNA uridine(34) hydroxylase from Vibrio cholerae serotype O1 (strain ATCC 39315 / El Tor Inaba N16961).